The primary structure comprises 144 residues: Glycophorin-A (144 aa).

Positions 1-25 (SSTTVPATHTSSSSLGPEQYVSSQS) are enriched in polar residues. Positions 1-55 (SSTTVPATHTSSSSLGPEQYVSSQSNDKHTSDSHPTPTSAHEVTTEFSGRTHYPP) are disordered. Ser2 carries O-linked (GalNAc...) serine glycosylation. O-linked (GalNAc...) threonine glycans are attached at residues Thr3, Thr4, Thr8, and Thr10. Ser11, Ser12, Ser13, Ser14, Ser22, and Ser23 each carry an O-linked (GalNAc...) serine glycan. O-linked (GalNAc...) threonine glycans are attached at residues Thr30, Thr36, Thr38, Thr44, and Thr45. Polar residues predominate over residues 33–48 (SHPTPTSAHEVTTEFS). An O-linked (GalNAc...) serine glycan is attached at Ser48. Thr51 carries O-linked (GalNAc...) threonine glycosylation. Residues 70–92 (LVIALIIFGVMAGVIGTILFISY) traverse the membrane as a helical segment. The disordered stretch occupies residues 101–144 (SESDVQPLPPPDAEVPLSSVEIEDPEETDELNSFTKPNQERNES). Position 118 is a phosphoserine (Ser118). Residues 121-130 (EIEDPEETDE) are compositionally biased toward acidic residues.

The protein belongs to the glycophorin-A family. Homodimer. Component of the ankyrin-1 complex in the erythrocyte, composed of ANK1, RHCE, RHAG, SLC4A1, EPB42, GYPA, GYPB and AQP1. Interacts with SLC4A1; a GYPA monomer is bound at each end of the SLC4A1 dimer forming a heterotetramer.

It is found in the membrane. Its function is as follows. Component of the ankyrin-1 complex, a multiprotein complex involved in the stability and shape of the erythrocyte membrane. Glycophorin A is the major intrinsic membrane protein of the erythrocyte. The N-terminal glycosylated segment, which lies outside the erythrocyte membrane, has MN blood group receptors. Appears to be important for the function of SLC4A1 and is required for high activity of SLC4A1. May be involved in translocation of SLC4A1 to the plasma membrane. The protein is Glycophorin-A of Macaca fuscata fuscata (Japanese macaque).